The primary structure comprises 656 residues: DNA mismatch repair protein MutL (656 aa).

The tract at residues 385–427 (DNSDSLTEQNSTDYTVNQPETGSVSEKITDRTVESSNEFTDRT) is disordered. Positions 387–410 (SDSLTEQNSTDYTVNQPETGSVSE) are enriched in polar residues. Over residues 411 to 427 (KITDRTVESSNEFTDRT) the composition is skewed to basic and acidic residues.

It belongs to the DNA mismatch repair MutL/HexB family.

In terms of biological role, this protein is involved in the repair of mismatches in DNA. It is required for dam-dependent methyl-directed DNA mismatch repair. May act as a 'molecular matchmaker', a protein that promotes the formation of a stable complex between two or more DNA-binding proteins in an ATP-dependent manner without itself being part of a final effector complex. This chain is DNA mismatch repair protein MutL, found in Lactococcus lactis subsp. cremoris (strain SK11).